The chain runs to 201 residues: dCTP deaminase, dUMP-forming (201 aa).

Residues 101-106 (KSSLGR), aspartate 119, 127-129 (TLE), glutamine 148, tyrosine 162, and glutamine 174 contribute to the dCTP site. Glutamate 129 (proton donor/acceptor) is an active-site residue. Positions 166–183 (EYSSRYQGQRGPTASRSF) are enriched in polar residues. Residues 166-201 (EYSSRYQGQRGPTASRSFLNFHRTDVSGTEAGRSSS) are disordered.

This sequence belongs to the dCTP deaminase family. As to quaternary structure, homotrimer.

It carries out the reaction dCTP + 2 H2O = dUMP + NH4(+) + diphosphate. Its pathway is pyrimidine metabolism; dUMP biosynthesis; dUMP from dCTP: step 1/1. Functionally, bifunctional enzyme that catalyzes both the deamination of dCTP to dUTP and the hydrolysis of dUTP to dUMP without releasing the toxic dUTP intermediate. In Leifsonia xyli subsp. xyli (strain CTCB07), this protein is dCTP deaminase, dUMP-forming.